Here is a 237-residue protein sequence, read N- to C-terminus: Phosphoribosylaminoimidazole-succinocarboxamide synthase (237 aa).

Belongs to the SAICAR synthetase family.

It carries out the reaction 5-amino-1-(5-phospho-D-ribosyl)imidazole-4-carboxylate + L-aspartate + ATP = (2S)-2-[5-amino-1-(5-phospho-beta-D-ribosyl)imidazole-4-carboxamido]succinate + ADP + phosphate + 2 H(+). It participates in purine metabolism; IMP biosynthesis via de novo pathway; 5-amino-1-(5-phospho-D-ribosyl)imidazole-4-carboxamide from 5-amino-1-(5-phospho-D-ribosyl)imidazole-4-carboxylate: step 1/2. This chain is Phosphoribosylaminoimidazole-succinocarboxamide synthase, found in Listeria welshimeri serovar 6b (strain ATCC 35897 / DSM 20650 / CCUG 15529 / CIP 8149 / NCTC 11857 / SLCC 5334 / V8).